A 191-amino-acid polypeptide reads, in one-letter code: Lipopolysaccharide export system protein LptC (191 aa).

The helical transmembrane segment at 7 to 25 (WVIIVLSLAVLVMIGINMA) threads the bilayer.

This sequence belongs to the LptC family. As to quaternary structure, component of the lipopolysaccharide transport and assembly complex. Interacts with LptA and the LptBFG transporter complex.

It localises to the cell inner membrane. Its function is as follows. Involved in the assembly of lipopolysaccharide (LPS). Required for the translocation of LPS from the inner membrane to the outer membrane. Facilitates the transfer of LPS from the inner membrane to the periplasmic protein LptA. Could be a docking site for LptA. This Escherichia coli O157:H7 protein is Lipopolysaccharide export system protein LptC.